Consider the following 382-residue polypeptide: Probable purine permease 4 (382 aa).

The next 10 helical transmembrane spans lie at 25–45 (LTLLIVTYFFLFFGSIASSLL), 62–82 (WVQSAGFPLLLILIYFPHYVL), 98–118 (LIFSVLIGLVLGFNNFLFSWG), 121–141 (YLPVSTSSLLLSTQLVFTLIL), 150–170 (ITFSNLNCVVLLTLSSVLLAL), 185–205 (YFIGYVSTIGAGLLFALYLPV), 224–244 (LVMEFAATVFATIGMACEGGF), 260–280 (TFYWTFAILANVVTWQLSFAA), 291–311 (ITGGICMTALLAMNVIGGVVA), and 315–335 (VFGGVKIVSTVLCIWGFSSYT). The EamA domain maps to 66 to 170 (AGFPLLLILI…LTLSSVLLAL (105 aa)). The tract at residues 345–364 (EEKEKGEYSGVKTTEDSGEM) is disordered.

The protein belongs to the purine permeases (TC 2.A.7.14) family.

The protein resides in the membrane. The polypeptide is Probable purine permease 4 (PUP4) (Arabidopsis thaliana (Mouse-ear cress)).